Consider the following 264-residue polypeptide: uncharacterized protein (264 aa).

The helical transmembrane segment at 7–27 (LTLGICLVLLIILIVGYVIMT) threads the bilayer.

Belongs to the staphylococcal tandem lipoprotein family.

Its subcellular location is the cell membrane. This is an uncharacterized protein from Staphylococcus aureus (strain MW2).